The primary structure comprises 152 residues: UPF0225 protein YchJ (152 aa).

It belongs to the UPF0225 family.

This is UPF0225 protein YchJ from Shigella flexneri serotype 5b (strain 8401).